The primary structure comprises 204 residues: Small ribosomal subunit protein uS4 (204 aa).

One can recognise an S4 RNA-binding domain in the interval 93–156 (SRLSSVLYHS…AKIPVVVEAE (64 aa)).

Belongs to the universal ribosomal protein uS4 family. As to quaternary structure, part of the 30S ribosomal subunit. Contacts protein S5. The interaction surface between S4 and S5 is involved in control of translational fidelity.

Functionally, one of the primary rRNA binding proteins, it binds directly to 16S rRNA where it nucleates assembly of the body of the 30S subunit. With S5 and S12 plays an important role in translational accuracy. In Wolbachia pipientis wMel, this protein is Small ribosomal subunit protein uS4.